The following is a 163-amino-acid chain: MTVLTIEEMAETLAPRQAIAGLDLGTKTIGLSMSDLGRRFATPRPVIRRVKFTIDAQALMDFATAEKVAGFVIGLPMNMDGSAGPRVQATRAFVRNMEQKTALPFVYWDERLSTVAAERTLLEMDVSRAKRAERIDSAAASFILQGALDRLSLLARSDGDEFS.

The protein belongs to the YqgF nuclease family.

The protein localises to the cytoplasm. Could be a nuclease involved in processing of the 5'-end of pre-16S rRNA. The chain is Putative pre-16S rRNA nuclease from Rhizobium leguminosarum bv. trifolii (strain WSM2304).